Here is a 236-residue protein sequence, read N- to C-terminus: tRNA (guanine-N(1)-)-methyltransferase (236 aa).

Residues Gly-110 and Leu-129–Leu-134 contribute to the S-adenosyl-L-methionine site.

The protein belongs to the RNA methyltransferase TrmD family. In terms of assembly, homodimer.

Its subcellular location is the cytoplasm. The catalysed reaction is guanosine(37) in tRNA + S-adenosyl-L-methionine = N(1)-methylguanosine(37) in tRNA + S-adenosyl-L-homocysteine + H(+). Its function is as follows. Specifically methylates guanosine-37 in various tRNAs. This chain is tRNA (guanine-N(1)-)-methyltransferase, found in Clostridium perfringens (strain ATCC 13124 / DSM 756 / JCM 1290 / NCIMB 6125 / NCTC 8237 / Type A).